Reading from the N-terminus, the 980-residue chain is Probable outer membrane protein PmpH (980 aa).

Positions 1–24 are cleaved as a signal peptide; it reads MPFSLRSTSFCFLACLCSYSYGLA. Residues 661 to 980 enclose the Autotransporter domain; that stretch reads GELVPNSLWV…FVSLGLNRIF (320 aa).

The protein belongs to the PMP outer membrane protein family.

The protein localises to the secreted. The protein resides in the cell wall. Its subcellular location is the cell outer membrane. The chain is Probable outer membrane protein PmpH (pmpH) from Chlamydia muridarum (strain MoPn / Nigg).